An 880-amino-acid polypeptide reads, in one-letter code: Alanine--tRNA ligase (880 aa).

Residues histidine 566, histidine 570, cysteine 668, and histidine 672 each coordinate Zn(2+).

This sequence belongs to the class-II aminoacyl-tRNA synthetase family. Zn(2+) serves as cofactor.

Its subcellular location is the cytoplasm. It carries out the reaction tRNA(Ala) + L-alanine + ATP = L-alanyl-tRNA(Ala) + AMP + diphosphate. Functionally, catalyzes the attachment of alanine to tRNA(Ala) in a two-step reaction: alanine is first activated by ATP to form Ala-AMP and then transferred to the acceptor end of tRNA(Ala). Also edits incorrectly charged Ser-tRNA(Ala) and Gly-tRNA(Ala) via its editing domain. The chain is Alanine--tRNA ligase from Parafrankia sp. (strain EAN1pec).